Here is a 98-residue protein sequence, read N- to C-terminus: NADH-ubiquinone oxidoreductase chain 4L (98 aa).

3 helical membrane-spanning segments follow: residues M1–L21, S29–L49, and I61–V81.

The protein belongs to the complex I subunit 4L family. In terms of assembly, core subunit of respiratory chain NADH dehydrogenase (Complex I) which is composed of 45 different subunits.

The protein localises to the mitochondrion inner membrane. The catalysed reaction is a ubiquinone + NADH + 5 H(+)(in) = a ubiquinol + NAD(+) + 4 H(+)(out). Functionally, core subunit of the mitochondrial membrane respiratory chain NADH dehydrogenase (Complex I) which catalyzes electron transfer from NADH through the respiratory chain, using ubiquinone as an electron acceptor. Part of the enzyme membrane arm which is embedded in the lipid bilayer and involved in proton translocation. The polypeptide is NADH-ubiquinone oxidoreductase chain 4L (MT-ND4L) (Platyrrhinus helleri (Heller's broad-nosed bat)).